The following is a 142-amino-acid chain: Large ribosomal subunit protein uL11 (142 aa).

Belongs to the universal ribosomal protein uL11 family. As to quaternary structure, part of the ribosomal stalk of the 50S ribosomal subunit. Interacts with L10 and the large rRNA to form the base of the stalk. L10 forms an elongated spine to which L12 dimers bind in a sequential fashion forming a multimeric L10(L12)X complex. One or more lysine residues are methylated.

Forms part of the ribosomal stalk which helps the ribosome interact with GTP-bound translation factors. The sequence is that of Large ribosomal subunit protein uL11 from Shewanella loihica (strain ATCC BAA-1088 / PV-4).